An 800-amino-acid polypeptide reads, in one-letter code: Phenylalanine--tRNA ligase beta subunit (800 aa).

One can recognise a tRNA-binding domain in the interval 39-154; it reads TKEIKNLVVG…TEVKPGTDAL (116 aa). The 76-residue stretch at 408 to 483 folds into the B5 domain; the sequence is CFVTPIDISV…RIYGYDKIPS (76 aa). Positions 461, 467, 470, and 471 each coordinate Mg(2+). Residues 708 to 800 enclose the FDX-ACB domain; that stretch reads PRFPGVSRDI…ALKSEGATIR (93 aa).

It belongs to the phenylalanyl-tRNA synthetase beta subunit family. Type 1 subfamily. In terms of assembly, tetramer of two alpha and two beta subunits. Mg(2+) serves as cofactor.

It localises to the cytoplasm. It catalyses the reaction tRNA(Phe) + L-phenylalanine + ATP = L-phenylalanyl-tRNA(Phe) + AMP + diphosphate + H(+). The polypeptide is Phenylalanine--tRNA ligase beta subunit (Staphylococcus saprophyticus subsp. saprophyticus (strain ATCC 15305 / DSM 20229 / NCIMB 8711 / NCTC 7292 / S-41)).